The sequence spans 215 residues: Urease accessory protein UreG 2 (215 aa).

11–18 provides a ligand contact to GTP; it reads GPVGSGKT.

The protein belongs to the SIMIBI class G3E GTPase family. UreG subfamily. As to quaternary structure, homodimer. UreD, UreF and UreG form a complex that acts as a GTP-hydrolysis-dependent molecular chaperone, activating the urease apoprotein by helping to assemble the nickel containing metallocenter of UreC. The UreE protein probably delivers the nickel.

It is found in the cytoplasm. In terms of biological role, facilitates the functional incorporation of the urease nickel metallocenter. This process requires GTP hydrolysis, probably effectuated by UreG. The protein is Urease accessory protein UreG 2 of Methylorubrum populi (strain ATCC BAA-705 / NCIMB 13946 / BJ001) (Methylobacterium populi).